Reading from the N-terminus, the 789-residue chain is Protein translocase subunit SecA (789 aa).

Residues Gln-85, 103–107 (GEGKT), and Asp-492 each bind ATP.

It belongs to the SecA family. As to quaternary structure, monomer and homodimer. Part of the essential Sec protein translocation apparatus which comprises SecA, SecYEG and auxiliary proteins SecDF. Other proteins may also be involved.

It is found in the cell membrane. The protein localises to the cytoplasm. It carries out the reaction ATP + H2O + cellular proteinSide 1 = ADP + phosphate + cellular proteinSide 2.. In terms of biological role, part of the Sec protein translocase complex. Interacts with the SecYEG preprotein conducting channel. Has a central role in coupling the hydrolysis of ATP to the transfer of proteins into and across the cell membrane, serving as an ATP-driven molecular motor driving the stepwise translocation of polypeptide chains across the membrane. This is Protein translocase subunit SecA from Limosilactobacillus fermentum (strain NBRC 3956 / LMG 18251) (Lactobacillus fermentum).